Consider the following 446-residue polypeptide: Carbamoyl phosphate synthase small chain, chloroplastic (446 aa).

A compositionally biased stretch (low complexity) spans 1–32; it reads MAAPPATASAPSLRPSAASPRAAAARSVAVPS. The tract at residues 1–44 is disordered; that stretch reads MAAPPATASAPSLRPSAASPRAAAARSVAVPSGPRTVGPRRDGG. Residues 1 to 50 constitute a chloroplast transit peptide; sequence MAAPPATASAPSLRPSAASPRAAAARSVAVPSGPRTVGPRRDGGRFLGVR. The Glutamine amidotransferase type-1 domain occupies 261–446; the sequence is HVVAYDFGIK…FIEMMKNNRL (186 aa). Cysteine 336 acts as the Nucleophile in catalysis. Active-site residues include histidine 420 and glutamate 422.

Belongs to the CarA family. In terms of assembly, heterodimer composed of 2 chains; the small (or glutamine) chain promotes the hydrolysis of glutamine to ammonia, which is used by the large (or ammonia) chain to synthesize carbamoyl phosphate.

It localises to the plastid. It is found in the chloroplast. The catalysed reaction is hydrogencarbonate + L-glutamine + 2 ATP + H2O = carbamoyl phosphate + L-glutamate + 2 ADP + phosphate + 2 H(+). It catalyses the reaction L-glutamine + H2O = L-glutamate + NH4(+). It participates in amino-acid biosynthesis; L-arginine biosynthesis; carbamoyl phosphate from bicarbonate: step 1/1. It functions in the pathway pyrimidine metabolism; UMP biosynthesis via de novo pathway; (S)-dihydroorotate from bicarbonate: step 1/3. Functionally, small subunit of the arginine-specific carbamoyl phosphate synthase (CPSase). CPSase catalyzes the formation of carbamoyl phosphate from the ammonia moiety of glutamine, carbonate, and phosphate donated by ATP, the first step of the arginine biosynthetic pathway. The small subunit (glutamine amidotransferase) binds and cleaves glutamine to supply the large subunit with the substrate ammonia. In Oryza sativa subsp. japonica (Rice), this protein is Carbamoyl phosphate synthase small chain, chloroplastic (CARA).